Here is a 98-residue protein sequence, read N- to C-terminus: MNQTAILICCLVFLTLSGIQGIPLSRTVRCTCISISNQPVNPRSLEKLEIIPPSQFCPHVEIIATMKKKGEKRCLNPESKAIKNLLKAVSEKKSKRPP.

The first 21 residues, 1 to 21 (MNQTAILICCLVFLTLSGIQG), serve as a signal peptide directing secretion. Arg26 carries the citrulline modification. Disulfide bonds link Cys30–Cys57 and Cys32–Cys74.

The protein belongs to the intercrine alpha (chemokine CxC) family.

The protein localises to the secreted. Chemotactic for monocytes and T-lymphocytes. Binds to CXCR3. The chain is C-X-C motif chemokine 10 (CXCL10) from Macaca nemestrina (Pig-tailed macaque).